We begin with the raw amino-acid sequence, 315 residues long: Methionyl-tRNA formyltransferase (315 aa).

113–116 (SLLP) contacts (6S)-5,6,7,8-tetrahydrofolate.

This sequence belongs to the Fmt family.

The catalysed reaction is L-methionyl-tRNA(fMet) + (6R)-10-formyltetrahydrofolate = N-formyl-L-methionyl-tRNA(fMet) + (6S)-5,6,7,8-tetrahydrofolate + H(+). Attaches a formyl group to the free amino group of methionyl-tRNA(fMet). The formyl group appears to play a dual role in the initiator identity of N-formylmethionyl-tRNA by promoting its recognition by IF2 and preventing the misappropriation of this tRNA by the elongation apparatus. This is Methionyl-tRNA formyltransferase from Escherichia coli (strain SMS-3-5 / SECEC).